The sequence spans 247 residues: PF03932 family protein CutC (247 aa).

It belongs to the CutC family.

It is found in the cytoplasm. This chain is PF03932 family protein CutC, found in Enterobacter sp. (strain 638).